The following is a 1295-amino-acid chain: Phosphoribosylformylglycinamidine synthase (1295 aa).

The tract at residues 305–327 (WPGAATGSGGEIRDEGATGRGAK) is disordered. ATP is bound by residues 307 to 318 (GAATGSGGEIRD) and alanine 678. Mg(2+)-binding residues include glutamate 718, asparagine 722, and aspartate 884. Residue serine 886 coordinates ATP. The region spanning 1042 to 1295 (VAVLREQGVN…IFRNARKQLG (254 aa)) is the Glutamine amidotransferase type-1 domain. Cysteine 1135 functions as the Nucleophile in the catalytic mechanism. Residues histidine 1260 and glutamate 1262 contribute to the active site.

This sequence in the N-terminal section; belongs to the FGAMS family. In terms of assembly, monomer.

It localises to the cytoplasm. The enzyme catalyses N(2)-formyl-N(1)-(5-phospho-beta-D-ribosyl)glycinamide + L-glutamine + ATP + H2O = 2-formamido-N(1)-(5-O-phospho-beta-D-ribosyl)acetamidine + L-glutamate + ADP + phosphate + H(+). It participates in purine metabolism; IMP biosynthesis via de novo pathway; 5-amino-1-(5-phospho-D-ribosyl)imidazole from N(2)-formyl-N(1)-(5-phospho-D-ribosyl)glycinamide: step 1/2. Functionally, phosphoribosylformylglycinamidine synthase involved in the purines biosynthetic pathway. Catalyzes the ATP-dependent conversion of formylglycinamide ribonucleotide (FGAR) and glutamine to yield formylglycinamidine ribonucleotide (FGAM) and glutamate. This Shigella sonnei (strain Ss046) protein is Phosphoribosylformylglycinamidine synthase.